The sequence spans 245 residues: tRNA1(Val) (adenine(37)-N6)-methyltransferase (245 aa).

This sequence belongs to the methyltransferase superfamily. tRNA (adenine-N(6)-)-methyltransferase family.

Its subcellular location is the cytoplasm. The enzyme catalyses adenosine(37) in tRNA1(Val) + S-adenosyl-L-methionine = N(6)-methyladenosine(37) in tRNA1(Val) + S-adenosyl-L-homocysteine + H(+). In terms of biological role, specifically methylates the adenine in position 37 of tRNA(1)(Val) (anticodon cmo5UAC). The protein is tRNA1(Val) (adenine(37)-N6)-methyltransferase of Escherichia coli (strain UTI89 / UPEC).